The chain runs to 157 residues: Ribosome maturation factor RimP (157 aa).

The protein belongs to the RimP family.

The protein localises to the cytoplasm. Required for maturation of 30S ribosomal subunits. The sequence is that of Ribosome maturation factor RimP from Geobacillus kaustophilus (strain HTA426).